The sequence spans 360 residues: MIIWLAELLQPYFSFFRLFEYLSFRAILSVLTALGLSLWMGPRLIKRLQLLQIGQVVRNEGPESHFSKRGTPTMGGVMILAAISITILLWANLSNPYVWAVLAVLMGYGAVGFVDDYRKVVRKNTDGLIARWKYFWQSAIALIVAFALYAYGKDTAATQLVVPFFKDVMPQLGLMYIVLTYFVIVGTSNAVNLTDGLDGLAIMPTVLVAAGFAVIAWATGNVNFSQYLHIPYLPHASELVVVCTAIVGAGLGFLWFNTYPAQVFMGDVGSLALGGALGTIAVLVRQELVLVIMGGVFVMETLSVILQVGSYKLRGQRIFRMAPIHHHYELKGWPEPRVIVRFWIISMVLVLIGLATLKVR.

10 helical membrane passes run 21 to 41 (YLSF…LWMG), 73 to 93 (TMGG…WANL), 94 to 114 (SNPY…VGFV), 132 to 152 (WKYF…YAYG), 168 to 188 (VMPQ…VGTS), 199 to 219 (GLAI…AWAT), 236 to 256 (ASEL…FLWF), 263 to 283 (VFMG…IAVL), 288 to 308 (LVLV…ILQV), and 338 to 358 (VIVR…ATLK).

The protein belongs to the glycosyltransferase 4 family. MraY subfamily. Requires Mg(2+) as cofactor.

It is found in the cell inner membrane. It carries out the reaction UDP-N-acetyl-alpha-D-muramoyl-L-alanyl-gamma-D-glutamyl-meso-2,6-diaminopimeloyl-D-alanyl-D-alanine + di-trans,octa-cis-undecaprenyl phosphate = di-trans,octa-cis-undecaprenyl diphospho-N-acetyl-alpha-D-muramoyl-L-alanyl-D-glutamyl-meso-2,6-diaminopimeloyl-D-alanyl-D-alanine + UMP. Its pathway is cell wall biogenesis; peptidoglycan biosynthesis. Its function is as follows. Catalyzes the initial step of the lipid cycle reactions in the biosynthesis of the cell wall peptidoglycan: transfers peptidoglycan precursor phospho-MurNAc-pentapeptide from UDP-MurNAc-pentapeptide onto the lipid carrier undecaprenyl phosphate, yielding undecaprenyl-pyrophosphoryl-MurNAc-pentapeptide, known as lipid I. The chain is Phospho-N-acetylmuramoyl-pentapeptide-transferase from Vibrio vulnificus (strain CMCP6).